A 346-amino-acid polypeptide reads, in one-letter code: Annexin A1 (346 aa).

Residue Ser-5 is modified to Phosphoserine; by TRPM7. Gln-19 is covalently cross-linked (Isoglutamyl lysine isopeptide (Gln-Lys) (interchain with K-?)). Position 21 is a phosphotyrosine; by EGFR (Tyr-21). Residues Ser-34 and Ser-37 each carry the phosphoserine modification. Annexin repeat units follow at residues 42–113 (FNPS…ALLK), 114–185 (TPAR…SLAK), 197–269 (DLAD…AIVK), and 273–344 (SKPM…ALCG). Lys-58 carries the post-translational modification N6-acetyllysine. Gly-59, Val-60, Glu-62, Lys-97, Leu-100, Glu-105, Met-127, Gly-129, Gly-131, Thr-132, and Glu-134 together coordinate Ca(2+). A Phosphothreonine modification is found at Thr-136. Positions 171, 210, and 213 each coordinate Ca(2+). Lys-214 participates in a covalent cross-link: Glycyl lysine isopeptide (Lys-Gly) (interchain with G-Cter in SUMO1); alternate. A Glycyl lysine isopeptide (Lys-Gly) (interchain with G-Cter in SUMO2); alternate cross-link involves residue Lys-214. Ca(2+) is bound by residues Gly-215, Asp-253, Glu-255, and Met-256. Lys-257 participates in a covalent cross-link: Glycyl lysine isopeptide (Lys-Gly) (interchain with G-Cter in SUMO1). The Ca(2+) site is built by Glu-261, Met-286, Gly-288, and Gly-290. Lys-312 bears the N6-acetyllysine mark. A disulfide bond links Cys-324 and Cys-343. Ca(2+)-binding residues include Leu-328, Glu-330, and Thr-331. A Glycyl lysine isopeptide (Lys-Gly) (interchain with G-Cter in SUMO1) cross-link involves residue Lys-332. Glu-336 contributes to the Ca(2+) binding site.

Belongs to the annexin family. In terms of assembly, homodimer; non-covalently linked. Homodimer; linked by transglutamylation. Homodimers linked by transglutamylation are observed in placenta, but not in other tissues. Interacts with S100A11. Heterotetramer, formed by two molecules each of S100A11 and ANXA1. Interacts with DYSF. Interacts with EGFR. Post-translationally, phosphorylated by protein kinase C, EGFR and TRPM7. Phosphorylated in response to EGF treatment. In terms of processing, sumoylated. Proteolytically cleaved by cathepsin CTSG to release the active N-terminal peptide Ac2-26.

The protein resides in the nucleus. It localises to the cytoplasm. It is found in the cell projection. Its subcellular location is the cilium. The protein localises to the basolateral cell membrane. The protein resides in the lateral cell membrane. It localises to the cell membrane. It is found in the apical cell membrane. Its subcellular location is the membrane. The protein localises to the early endosome. The protein resides in the cytoplasmic vesicle membrane. It localises to the endosome membrane. It is found in the secreted. Its subcellular location is the extracellular space. The protein localises to the extracellular exosome. The protein resides in the cytoplasmic vesicle. It localises to the secretory vesicle lumen. It is found in the phagocytic cup. Plays important roles in the innate immune response as effector of glucocorticoid-mediated responses and regulator of the inflammatory process. Has anti-inflammatory activity. Plays a role in glucocorticoid-mediated down-regulation of the early phase of the inflammatory response. Contributes to the adaptive immune response by enhancing signaling cascades that are triggered by T-cell activation, regulates differentiation and proliferation of activated T-cells. Promotes the differentiation of T-cells into Th1 cells and negatively regulates differentiation into Th2 cells. Has no effect on unstimulated T-cells. Negatively regulates hormone exocytosis via activation of the formyl peptide receptors and reorganization of the actin cytoskeleton. Has high affinity for Ca(2+) and can bind up to eight Ca(2+) ions. Displays Ca(2+)-dependent binding to phospholipid membranes. Plays a role in the formation of phagocytic cups and phagosomes. Plays a role in phagocytosis by mediating the Ca(2+)-dependent interaction between phagosomes and the actin cytoskeleton. Functionally, functions at least in part by activating the formyl peptide receptors and downstream signaling cascades. Promotes chemotaxis of granulocytes and monocytes via activation of the formyl peptide receptors. Promotes rearrangement of the actin cytoskeleton, cell polarization and cell migration. Promotes resolution of inflammation and wound healing. Acts via neutrophil N-formyl peptide receptors to enhance the release of CXCL2. This is Annexin A1 (ANXA1) from Equus caballus (Horse).